The primary structure comprises 307 residues: Small ribosomal subunit biogenesis GTPase RsgA (307 aa).

Residues 1 to 21 (MPSEHPFSDGISTPNPKETMN) form a disordered region. Positions 10–21 (GISTPNPKETMN) are enriched in polar residues. The 158-residue stretch at 85 to 242 (RQDAWKTKLI…LIDSPGLQEF (158 aa)) folds into the CP-type G domain. GTP-binding positions include 135–138 (NKAD) and 184–192 (GQSGMGKST). Residues C266, C271, H273, and C279 each coordinate Zn(2+).

Belongs to the TRAFAC class YlqF/YawG GTPase family. RsgA subfamily. Monomer. Associates with 30S ribosomal subunit, binds 16S rRNA. It depends on Zn(2+) as a cofactor.

The protein resides in the cytoplasm. In terms of biological role, one of several proteins that assist in the late maturation steps of the functional core of the 30S ribosomal subunit. Helps release RbfA from mature subunits. May play a role in the assembly of ribosomal proteins into the subunit. Circularly permuted GTPase that catalyzes slow GTP hydrolysis, GTPase activity is stimulated by the 30S ribosomal subunit. This is Small ribosomal subunit biogenesis GTPase RsgA from Neisseria gonorrhoeae (strain ATCC 700825 / FA 1090).